Here is a 301-residue protein sequence, read N- to C-terminus: Chitosanase (301 aa).

The signal sequence occupies residues 1–42 (MHMSNARPSKSRTKFLLAFLCFTLMASLFGATALFGPSKAAA). The active-site Proton donor is the Glu79. Cys92 and Cys166 are oxidised to a cystine. Catalysis depends on Asp97, which acts as the Nucleophile.

The protein belongs to the glycosyl hydrolase 46 family.

Its subcellular location is the secreted. It catalyses the reaction Endohydrolysis of beta-(1-&gt;4)-linkages between D-glucosamine residues in a partly acetylated chitosan.. In terms of biological role, aids in the defense against invading fungal pathogens by degrading their cell wall chitosan. This is Chitosanase (csn) from Niallia circulans (Bacillus circulans).